The sequence spans 639 residues: Serine protease HtrA-like (639 aa).

Composition is skewed to basic and acidic residues over residues 1–13 (MDND…PREQ), 21–75 (YFHN…EIHQ), 106–187 (QQLK…KESS), and 195–205 (KSQKIEQKEQK). The tract at residues 1–262 (MDNDKKHVIP…LENEPKNNDT (262 aa)) is disordered. Residues 206–219 (ASSNETSNKELNSY) show a composition bias toward polar residues. 2 stretches are compositionally biased toward basic and acidic residues: residues 220 to 235 (TKDK…DLKK) and 245 to 262 (NKLE…NNDT). The helical transmembrane segment at 277–297 (IVIVVAIILIVILISAIISTM) threads the bilayer. Residues H374, D404, and S489 each act as charge relay system in the active site. The PDZ domain occupies 527-629 (EIAEELEKKG…TLSAKIYREG (103 aa)).

This sequence belongs to the peptidase S1C family.

The protein resides in the cell membrane. This chain is Serine protease HtrA-like, found in Staphylococcus haemolyticus (strain JCSC1435).